We begin with the raw amino-acid sequence, 206 residues long: 2-oxoglutarate-dependent dioxygenase iboH (206 aa).

The Fe2OG dioxygenase domain maps to 51-157; it reads PSTTTLVLLH…RYSIAYFLRP (107 aa). Fe cation is bound by residues His75, Asp77, and His134. Arg148 contacts 2-oxoglutarate.

This sequence belongs to the iron/ascorbate-dependent oxidoreductase family. Fe(2+) serves as cofactor.

The catalysed reaction is L-glutamate + 2-oxoglutarate + O2 = (3R)-3-hydroxy-L-glutamate + succinate + CO2. It participates in secondary metabolite biosynthesis. Its function is as follows. 2-oxoglutarate-dependent dioxygenase; part of the gene cluster that mediates the biosynthesis of the psychoactive metabolites ibotenic acid and muscimol. The first committed step is glutamate hydroxylation by the 2-oxoglutarate-dependent dioxygenase iboH, and the last step is decarboxylation of ibotenic acid to muscimol by the decarboxylase iboD. The order of the intermediate reactions is somewhat ambiguous. IboA likely activates the carboxylic acid at position 5 to introduce an amide bond, and the flavin monooxygenase iboF generates the N-O bond. There are several options for the latter step. One option is that iboF directly hydroxylates the amide nitrogen formed by iboA to produce a hydroxamic acid species. Another option is that iboF hydroxylates an external N-containing compound, whose resulting N-O bond is subsequently introduced into the hydroxyglutamate scaffold. The paralogous PLP-dependent cystathionine gamma-synthase-like enzymes iboG1 and iboG2 are likely involved in substitution of the OH group at position 3 by the O-N moiety. The first cyclic intermediate is most probably tricholomic acid which is likely desaturated to ibotenic acid by the cytochrome P450 monooxygenase iboC. This Amanita muscaria (strain Koide BX008) protein is 2-oxoglutarate-dependent dioxygenase iboH.